The chain runs to 316 residues: SHC-transforming protein homolog 1 (316 aa).

A PID domain is found at 16–158 (GVSLSATYLG…LIDVLTTAIN (143 aa)). The SH2 domain maps to 211–307 (WYHGNLSRED…ETSLNLIRPV (97 aa)). Positions 292-316 (SEGRDRETSLNLIRPVPCPGSDDIE) are disordered.

Interacts (via PID domain) with daf-2 (via cytoplasmic domain). Interacts with mek-1; the interaction is independent of mek-1 catalytic activity and is constitutive. Interacts (via N-terminus) with mlk-1 (via NPQY motif when phosphorylated on tyrosine residue). Does not interact with jkk-1 or sek-1. Interacts (via SH2 domain) with svh-2. Interacts with svh-4. Expressed in hypodermis, intestine, head and tail neurons, pharynx, gonads, vulva and body muscles.

It is found in the cytoplasm. Its subcellular location is the nucleus. The protein localises to the cell membrane. Its function is as follows. Scaffold protein which plays an important role in the activation of the JNK pathway composed of mlk-1, mek-1 and kgb-1; by bringing together mek-1 and mlk-1, promotes mlk-1-mediated phosphorylation and activation of mek-1 which in turn phosphorylates kgb-1. In addition, negatively modulates the activation of the insulin/IGF-1-like signaling (IIS) probably by inhibiting the insulin receptor daf-2. Positively regulates the activity of the transcription factor daf-16/FOXO by both inhibiting IIS and activating the JNK pathway. Plays a role in maintaining gonadal basement membrane integrity through activation of the JNK pathway components mek-1 and jnk-1. Involved in the response to several environmental stresses including heavy metal ions (Cu(2+) and Cd(2+)), heat, oxidative and protein misfolding (ER) stresses. Plays a role in gonad and germline development following the L1 diapause. Plays a role in life span and egg laying. Plays a role in axon regeneration after injury. This chain is SHC-transforming protein homolog 1, found in Caenorhabditis elegans.